The following is a 135-amino-acid chain: Small ribosomal subunit protein uS9 (135 aa).

The segment at 96–135 (SADNRKPLKTEGHLSRDPRAKERRKYGLKKARKAPQFSKR) is disordered. The span at 97-115 (ADNRKPLKTEGHLSRDPRA) shows a compositional bias: basic and acidic residues. The span at 116–135 (KERRKYGLKKARKAPQFSKR) shows a compositional bias: basic residues.

Belongs to the universal ribosomal protein uS9 family.

This is Small ribosomal subunit protein uS9 from Prochlorococcus marinus (strain MIT 9303).